The following is a 192-amino-acid chain: Adenylate kinase (192 aa).

An ATP-binding site is contributed by 12–17 (GSGKTT). The NMP stretch occupies residues 33–62 (STGDLLRAEVAKDSELGKKIDKIISGGNLV). AMP contacts are provided by residues Thr34, Arg39, 60-62 (NLV), 87-90 (GYPR), and Gln94. The LID stretch occupies residues 129-135 (GRARGAD). Arg130 provides a ligand contact to ATP. 2 residues coordinate AMP: Arg132 and Arg144. Arg172 contributes to the ATP binding site.

This sequence belongs to the adenylate kinase family. As to quaternary structure, monomer.

It is found in the cytoplasm. The enzyme catalyses AMP + ATP = 2 ADP. It participates in purine metabolism; AMP biosynthesis via salvage pathway; AMP from ADP: step 1/1. In terms of biological role, catalyzes the reversible transfer of the terminal phosphate group between ATP and AMP. Plays an important role in cellular energy homeostasis and in adenine nucleotide metabolism. In Campylobacter hominis (strain ATCC BAA-381 / DSM 21671 / CCUG 45161 / LMG 19568 / NCTC 13146 / CH001A), this protein is Adenylate kinase.